The chain runs to 476 residues: 3-isopropylmalate dehydratase large subunit (476 aa).

Cysteine 357, cysteine 417, and cysteine 420 together coordinate [4Fe-4S] cluster.

This sequence belongs to the aconitase/IPM isomerase family. LeuC type 1 subfamily. In terms of assembly, heterodimer of LeuC and LeuD. It depends on [4Fe-4S] cluster as a cofactor.

The catalysed reaction is (2R,3S)-3-isopropylmalate = (2S)-2-isopropylmalate. Its pathway is amino-acid biosynthesis; L-leucine biosynthesis; L-leucine from 3-methyl-2-oxobutanoate: step 2/4. In terms of biological role, catalyzes the isomerization between 2-isopropylmalate and 3-isopropylmalate, via the formation of 2-isopropylmaleate. This chain is 3-isopropylmalate dehydratase large subunit, found in Mycobacterium leprae (strain TN).